A 173-amino-acid polypeptide reads, in one-letter code: Protein TraS (173 aa).

It localises to the cell inner membrane. Involved in surface exclusion. The sequence is that of Protein TraS (traS) from Escherichia coli (strain K12).